We begin with the raw amino-acid sequence, 114 residues long: Biofilm growth-associated repressor (114 aa).

One can recognise an HTH arsR-type domain in the interval 17-111; the sequence is DMEKRANEVA…ALYTIFCAQE (95 aa). Positions 51-74 form a DNA-binding region, H-T-H motif; the sequence is VGELEQQIGIGQPTLSQQLGVLRE.

Its function is as follows. Represses an operon that comprises itself, XF_0764, XF_0765, XF_0766 and blh. Binds to a palindromic AT-rich sequence spanning the -10 region of the blh promoter and blocks transcription of the operon. The protein is Biofilm growth-associated repressor (bigR) of Xylella fastidiosa (strain 9a5c).